A 435-amino-acid chain; its full sequence is Methanethiol oxidase (435 aa).

Positions 1-24 (MKKHLLAGACALAMGFAVIPGTFA) are cleaved as a signal peptide.

The protein belongs to the selenium-binding protein family. As to quaternary structure, homotetramer. Cu cation is required as a cofactor.

The protein resides in the periplasm. It carries out the reaction methanethiol + O2 + H2O = hydrogen sulfide + formaldehyde + H2O2 + H(+). Its pathway is organosulfur degradation. Its activity is regulated as follows. Inhibited by EDTA but not by EGTA. In terms of biological role, catalyzes the oxidation of methanethiol. Can also degrade ethanethiol, but not methanol, methylamine or dimethylsulfide. This chain is Methanethiol oxidase, found in Hyphomicrobium sp.